The primary structure comprises 605 residues: Bifunctional purine biosynthesis protein ADE16 (605 aa).

In terms of domain architecture, MGS-like spans 1 to 147; the sequence is MSSEAPIALL…KNHGRVSIIS (147 aa). Residues 35 to 38, 65 to 68, 102 to 103, and 126 to 127 each bind IMP; these read SGGT, RVKT, CN, and DI. Lys-138 functions as the Proton donor/acceptor; for FAICAR cyclization activity in the catalytic mechanism. 5-amino-1-(5-phospho-beta-D-ribosyl)imidazole-4-carboxamide contacts are provided by residues 219-220, His-279, Gly-327, Asp-350, Asn-442, and Arg-462; that span reads RY. The active-site Proton acceptor; for AICAR formyltransferase activity is His-279. Ile-463 lines the (6R)-10-formyltetrahydrofolate pocket. Phe-554 is a binding site for 5-amino-1-(5-phospho-beta-D-ribosyl)imidazole-4-carboxamide. A (6R)-10-formyltetrahydrofolate-binding site is contributed by Asp-559. Position 601 (Arg-601) interacts with 5-amino-1-(5-phospho-beta-D-ribosyl)imidazole-4-carboxamide.

This sequence belongs to the PurH family. In terms of assembly, homodimer.

It localises to the cytoplasm. Its subcellular location is the cytosol. The enzyme catalyses (6R)-10-formyltetrahydrofolate + 5-amino-1-(5-phospho-beta-D-ribosyl)imidazole-4-carboxamide = 5-formamido-1-(5-phospho-D-ribosyl)imidazole-4-carboxamide + (6S)-5,6,7,8-tetrahydrofolate. The catalysed reaction is IMP + H2O = 5-formamido-1-(5-phospho-D-ribosyl)imidazole-4-carboxamide. The protein operates within purine metabolism; IMP biosynthesis via de novo pathway; 5-formamido-1-(5-phospho-D-ribosyl)imidazole-4-carboxamide from 5-amino-1-(5-phospho-D-ribosyl)imidazole-4-carboxamide (10-formyl THF route): step 1/1. Its pathway is purine metabolism; IMP biosynthesis via de novo pathway; IMP from 5-formamido-1-(5-phospho-D-ribosyl)imidazole-4-carboxamide: step 1/1. Functionally, bifunctional enzyme that catalyzes the last two steps of purine biosynthesis. Acts as a transformylase that incorporates a formyl group to the AMP analog AICAR (5-amino-1-(5-phospho-beta-D-ribosyl)imidazole-4-carboxamide) to produce the intermediate formyl-AICAR (FAICAR). Also catalyzes the cyclization of FAICAR to IMP. This Cryptococcus neoformans var. grubii serotype A (strain H99 / ATCC 208821 / CBS 10515 / FGSC 9487) (Filobasidiella neoformans var. grubii) protein is Bifunctional purine biosynthesis protein ADE16.